The chain runs to 490 residues: Aspartyl/glutamyl-tRNA(Asn/Gln) amidotransferase subunit B (490 aa).

It belongs to the GatB/GatE family. GatB subfamily. Heterotrimer of A, B and C subunits.

The catalysed reaction is L-glutamyl-tRNA(Gln) + L-glutamine + ATP + H2O = L-glutaminyl-tRNA(Gln) + L-glutamate + ADP + phosphate + H(+). It carries out the reaction L-aspartyl-tRNA(Asn) + L-glutamine + ATP + H2O = L-asparaginyl-tRNA(Asn) + L-glutamate + ADP + phosphate + 2 H(+). In terms of biological role, allows the formation of correctly charged Asn-tRNA(Asn) or Gln-tRNA(Gln) through the transamidation of misacylated Asp-tRNA(Asn) or Glu-tRNA(Gln) in organisms which lack either or both of asparaginyl-tRNA or glutaminyl-tRNA synthetases. The reaction takes place in the presence of glutamine and ATP through an activated phospho-Asp-tRNA(Asn) or phospho-Glu-tRNA(Gln). The polypeptide is Aspartyl/glutamyl-tRNA(Asn/Gln) amidotransferase subunit B (Symbiobacterium thermophilum (strain DSM 24528 / JCM 14929 / IAM 14863 / T)).